The chain runs to 326 residues: Phospho-N-acetylmuramoyl-pentapeptide-transferase (326 aa).

9 helical membrane-spanning segments follow: residues I3–I23, T51–F71, V79–L99, L115–M135, V138–V158, G169–A189, M195–N215, V221–H243, and F306–M326.

This sequence belongs to the glycosyltransferase 4 family. MraY subfamily. Mg(2+) is required as a cofactor.

Its subcellular location is the cell membrane. The catalysed reaction is UDP-N-acetyl-alpha-D-muramoyl-L-alanyl-gamma-D-glutamyl-L-lysyl-D-alanyl-D-alanine + di-trans,octa-cis-undecaprenyl phosphate = Mur2Ac(oyl-L-Ala-gamma-D-Glu-L-Lys-D-Ala-D-Ala)-di-trans,octa-cis-undecaprenyl diphosphate + UMP. It functions in the pathway cell wall biogenesis; peptidoglycan biosynthesis. Catalyzes the initial step of the lipid cycle reactions in the biosynthesis of the cell wall peptidoglycan: transfers peptidoglycan precursor phospho-MurNAc-pentapeptide from UDP-MurNAc-pentapeptide onto the lipid carrier undecaprenyl phosphate, yielding undecaprenyl-pyrophosphoryl-MurNAc-pentapeptide, known as lipid I. This Streptococcus pneumoniae (strain ATCC 700669 / Spain 23F-1) protein is Phospho-N-acetylmuramoyl-pentapeptide-transferase.